The sequence spans 962 residues: Glutamate receptor 1 (962 aa).

An N-terminal signal peptide occupies residues methionine 1–proline 25. Residues tyrosine 26–serine 591 lie on the Extracellular side of the membrane. 6 N-linked (GlcNAc...) asparagine glycosylation sites follow: asparagine 190, asparagine 220, asparagine 275, asparagine 333, asparagine 441, and asparagine 482. The chain crosses the membrane as a helical span at residues threonine 592–valine 612. Topologically, residues serine 613–serine 668 are cytoplasmic. A helical transmembrane segment spans residues alanine 669–leucine 689. Residues threonine 690–lysine 855 are Extracellular-facing. N-linked (GlcNAc...) asparagine glycosylation occurs at asparagine 852. The helical transmembrane segment at valine 856–glycine 876 threads the bilayer. Topologically, residues glutamate 877 to valine 962 are cytoplasmic.

It belongs to the glutamate-gated ion channel (TC 1.A.10.1) family. Interacts with sol-1. Interacts with cni-1; the interaction negatively regulates export of glr-1 from the endoplasmic reticulum to synapses. Interacts with usp-46; the interaction results in deubiquitination of glr-1. Ubiquitinated. Deubiquitinated by usp-46 which prevents its degradation. Post-translationally, glycosylated. In terms of tissue distribution, command interneurons of the locomotory control circuit (AIB, AVA, AVB, AVD, AVE and PVC) and motor neurons (RMD, RIM, SMD, AVG, PVQ and URY).

It localises to the postsynaptic cell membrane. It is found in the endoplasmic reticulum. Its subcellular location is the synapse. The protein resides in the cell membrane. The protein localises to the recycling endosome. It localises to the cell projection. It is found in the dendrite. Its subcellular location is the perikaryon. Functionally, non-NMDA (N-methyl-D-aspartate) ionotropic glutamate receptor. L-glutamate acts as an excitatory neurotransmitter at many synapses in the central nervous system. The postsynaptic actions of glutamate are mediated by a variety of receptors that are named according to their selective agonists. May contribute to a sensory discrimination between mechanical and chemical stimuli. Plays a role in controlling movement in response to environmental cues such as food availability and mechanosensory stimulation such as the nose touch response. In AIB interneurons, promotes omega turns, a movement that frequently follows backwards locomotion or 'reversals' in response to environmental cues while possibly playing an inhibitory role in alternative neurons to inhibit omega turns. The polypeptide is Glutamate receptor 1 (Caenorhabditis elegans).